The chain runs to 189 residues: Probable nicotinate-nucleotide adenylyltransferase (189 aa).

The protein belongs to the NadD family.

It carries out the reaction nicotinate beta-D-ribonucleotide + ATP + H(+) = deamido-NAD(+) + diphosphate. Its pathway is cofactor biosynthesis; NAD(+) biosynthesis; deamido-NAD(+) from nicotinate D-ribonucleotide: step 1/1. In terms of biological role, catalyzes the reversible adenylation of nicotinate mononucleotide (NaMN) to nicotinic acid adenine dinucleotide (NaAD). This is Probable nicotinate-nucleotide adenylyltransferase from Staphylococcus aureus (strain N315).